Reading from the N-terminus, the 252-residue chain is F-box/SPRY domain-containing protein 1 (252 aa).

One can recognise an F-box domain in the interval 1–48 (MVDPLCNYNVLEAIFSYLELSDLSRCSQVCKSWYHFLNDENSDVWRWH). One can recognise a B30.2/SPRY domain in the interval 58–250 (IKSDLLASVT…VSMVYLGTPL (193 aa)).

The protein belongs to the FBXO45/Fsn family. As to quaternary structure, component of an E3 ubiquitin ligase complex composed of hiw and Fsn.

It localises to the synapse. It participates in protein modification; protein ubiquitination. Required in the presynaptic motoneuron to down-regulate the levels of wnd and restrain synaptic terminal growth at the neuromuscular junction (NMJ). This Drosophila mojavensis (Fruit fly) protein is F-box/SPRY domain-containing protein 1.